A 312-amino-acid chain; its full sequence is Ribosomal RNA small subunit methyltransferase H (312 aa).

Residues 35–37, D55, F79, D101, and Q108 contribute to the S-adenosyl-L-methionine site; that span reads GGH.

Belongs to the methyltransferase superfamily. RsmH family.

It localises to the cytoplasm. The enzyme catalyses cytidine(1402) in 16S rRNA + S-adenosyl-L-methionine = N(4)-methylcytidine(1402) in 16S rRNA + S-adenosyl-L-homocysteine + H(+). Specifically methylates the N4 position of cytidine in position 1402 (C1402) of 16S rRNA. The protein is Ribosomal RNA small subunit methyltransferase H of Glaesserella parasuis serovar 5 (strain SH0165) (Haemophilus parasuis).